Consider the following 230-residue polypeptide: Ribose-5-phosphate isomerase A (230 aa).

Residues 29–32 (TGST), 85–88 (DGAD), and 98–101 (KGGG) contribute to the substrate site. Residue Glu-107 is the Proton acceptor of the active site. Lys-125 contributes to the substrate binding site.

This sequence belongs to the ribose 5-phosphate isomerase family. Homodimer.

The catalysed reaction is aldehydo-D-ribose 5-phosphate = D-ribulose 5-phosphate. The protein operates within carbohydrate degradation; pentose phosphate pathway; D-ribose 5-phosphate from D-ribulose 5-phosphate (non-oxidative stage): step 1/1. In terms of biological role, catalyzes the reversible conversion of ribose-5-phosphate to ribulose 5-phosphate. The chain is Ribose-5-phosphate isomerase A from Staphylococcus haemolyticus (strain JCSC1435).